The sequence spans 695 residues: Follicle-stimulating hormone receptor (695 aa).

Positions 1 to 17 (MSLLLVSLLAFLTLGSG) are cleaved as a signal peptide. Cystine bridges form between Cys-18/Cys-25 and Cys-23/Cys-32. Residues 18–46 (CHHRICHCSNGVFLCQESKVTEIPPDLPR) form the LRRNT domain. The Extracellular segment spans residues 18–366 (CHHRICHCSN…EDIMGHDILR (349 aa)). LRR repeat units follow at residues 49–72 (VELR…FGDL), 73–97 (EKIE…LPKL), 98–118 (HEIR…AFQN), 119–143 (LPNL…KIQS), 144–169 (LQKV…VGLS), 170–192 (FESM…AFNG), 193–216 (TQLD…VFQG), 217–240 (ASGP…GLEN), and 241–259 (LKKL…PSLE). Asn-191 and Asn-199 each carry an N-linked (GlcNAc...) asparagine glycan. 4 cysteine pairs are disulfide-bonded: Cys-275-Cys-346, Cys-276-Cys-292, Cys-276-Cys-356, and Cys-292-Cys-338. A glycan (N-linked (GlcNAc...) asparagine) is linked at Asn-293. Tyr-335 is subject to Sulfotyrosine. The helical transmembrane segment at 367–387 (VLIWFISILAITGNIIVLVIL) threads the bilayer. Residues 388-398 (ITSQYKLTVPR) lie on the Cytoplasmic side of the membrane. Residues 399 to 421 (FLMCNLAFADLCIGIYLLLIASV) form a helical membrane-spanning segment. Over 422 to 443 (DIHTKTQYHNYAIDWQTGAGCD) the chain is Extracellular. Cys-442 and Cys-517 form a disulfide bridge. Residues 444–465 (AAGFFTVFASELSVYTLTAITL) form a helical membrane-spanning segment. The Cytoplasmic portion of the chain corresponds to 466–485 (ERWHTITHAMQLQCKVQLRH). Residues 486–508 (AASIMLVGWIFAFTVALFPIFGI) traverse the membrane as a helical segment. Residues 509 to 528 (SSYMKVSICLPMDIDSPLSQ) lie on the Extracellular side of the membrane. Residues 529 to 550 (LYVVSLLVLNVLAFVVICGCYT) form a helical membrane-spanning segment. At 551–573 (HIYLTVRNPNIMSSSSDTKIAKR) the chain is on the cytoplasmic side. The helical transmembrane segment at 574–597 (MAMLIFTDFLCMAPISFFAISASL) threads the bilayer. At 598–608 (KVPLITVSKSK) the chain is on the extracellular side. A helical membrane pass occupies residues 609–630 (ILLVLFYPINSCANPFLYAIFT). Residues 631 to 695 (KNFRRDVFIL…LIPLSRLAQN (65 aa)) lie on the Cytoplasmic side of the membrane.

This sequence belongs to the G-protein coupled receptor 1 family. FSH/LSH/TSH subfamily. As to quaternary structure, homotrimer. Functions as a homotrimer binding the FSH hormone heterodimer composed of CGA and FSHB. Interacts with ARRB2. Interacts with APPL2; interaction is independent of follicle stimulating hormone stimulation. Post-translationally, N-glycosylated; indirectly required for FSH-binding, possibly via a conformational change that allows high affinity binding of hormone. Sulfated.

It is found in the cell membrane. G protein-coupled receptor for follitropin, the follicle-stimulating hormone. Through cAMP production activates the downstream PI3K-AKT and ERK1/ERK2 signaling pathways. This Sus scrofa (Pig) protein is Follicle-stimulating hormone receptor (FSHR).